A 1051-amino-acid polypeptide reads, in one-letter code: SWI/SNF-related matrix-associated actin-dependent regulator of chromatin subfamily A member 5 (1051 aa).

Residues 1–15 are compositionally biased toward pro residues; that stretch reads MSSAVEPPPPPPPES. A disordered region spans residues 1 to 81; sequence MSSAVEPPPP…IQEPDPTYEE (81 aa). Position 2 is an N-acetylserine (Ser-2). Positions 24–38 are enriched in gly residues; the sequence is GAGGSSSGNKGGPEG. A compositionally biased stretch (low complexity) spans 39-53; it reads GAAPAAPCAAGSGPA. Thr-55 is modified (phosphothreonine). Ser-65 is subject to Phosphoserine. Residues 68-81 show a composition bias toward basic and acidic residues; sequence KQKEIQEPDPTYEE. Lys-82 is covalently cross-linked (Glycyl lysine isopeptide (Lys-Gly) (interchain with G-Cter in SUMO2)). Thr-112 bears the Phosphothreonine mark. Ser-115, Ser-136, and Ser-170 each carry phosphoserine. Residues 191–356 enclose the Helicase ATP-binding domain; the sequence is ISLYENGING…WSLLNFLLPD (166 aa). Residue 204 to 211 coordinates ATP; sequence DEMGLGKT. Residues 307 to 310 carry the DEAH box motif; it reads DEAH. Residue Lys-439 is modified to N6-acetyllysine. The region spanning 486–637 is the Helicase C-terminal domain; that stretch reads VLDKLLPKLK…SIVIQQGRLV (152 aa). Glycyl lysine isopeptide (Lys-Gly) (interchain with G-Cter in SUMO2) cross-links involve residues Lys-643, Lys-646, Lys-693, Lys-721, and Lys-734. Residue Ser-754 is modified to Phosphoserine. SANT domains follow at residues 839–891 and 942–1006; these read QGFT…ERCN and KGKN…LITL. Lys-965 participates in a covalent cross-link: Glycyl lysine isopeptide (Lys-Gly) (interchain with G-Cter in SUMO2). Positions 1014–1051 are disordered; sequence LEEKEKAEKKKRGPKPSTQKRKMDGAPDGRGRKKKLKL. The segment covering 1022–1033 has biased composition (basic residues); it reads KKKRGPKPSTQK. Residues 1034–1043 show a composition bias toward basic and acidic residues; it reads RKMDGAPDGR.

Belongs to the SNF2/RAD54 helicase family. ISWI subfamily. As to quaternary structure, component of the ACF-5 ISWI chromatin-remodeling complex (also called the ACF/WCRF complex) at least composed of SMARCA5/SNF2H and BAZ1A/ACF1, which regulates the spacing of histone octamers on the DNA template to facilitate access to DNA. Within the complex interacts with BAZ1A/ACF1; the interaction is direct and is required to slide nucleosomes from end to center positions on a DNA template in an ATP-dependent manner. Component of the CHRAC ISWI chromatin-remodeling complex at least composed of SMARCA5/SNF2H, BAZ1A/ACF1, CHRAC1 and POLE3; the complex preferentially binds DNA through the CHRAC1-POLE3 heterodimer and possesses ATP-dependent nucleosome-remodeling activity. Within the complex interacts with BAZ1A/ACF1; the interaction is direct and promotes the interaction with the POLE3-CHRAC1 heterodimer. Within the complex interacts with the POLE3-CHRAC1 heterodimer; the interaction is direct and enhances nucleosome sliding activity by the SMARCA5/SNF2H and BAZ1A/ACF1 interaction. Neither POLE3 nor CHRAC1 enhances nucleosome sliding activity of the ACF-5 ISWI chromatin remodeling complex. Component of the WICH-5 ISWI chromatin-remodeling complex (also called the WICH complex) at least composed of SMARCA5/SNF2H and BAZ1B/WSTF, which regulates the spacing of histone octamers on the DNA template to facilitate access to DNA. Within the complex interacts with BAZ1B/WSTF. Component of the NoRC-5 ISWI chromatin-remodeling complex (also called the NoRC chromatin-remodeling complex) at least composed of SMARCA5/SNF2H and BAZ2A/TIP5; the complex suppresses rDNA transcription by a combination of nucleosome remodeling, histone deacetylation, and DNA methylation. Within the complex interacts with BAZ2A/TIP5. Within the complex interacts with HDAC1. Component of the BRF-5 ISWI chromatin-remodeling complex at least composed of SMARCA5/SNF2H and BAZ2B. Within the complex interacts with BAZ2B. Component of the NURF-5 ISWI chromatin-remodeling complex at least composed of SMARCA5/SNF2H and BPTF. Within the complex interacts with BPFT. Component of the CERF-5 ISWI chromatin-remodeling complex at least composed of SMARCA5/SNF2H and CECR2. LUZP1 is detected as part of the CERF-5 complex in embryonic stem cells where it is involved in complex stabilization but is not detected in the complex in the testis. Component of the RSF-5 ISWI chromatin-remodeling complex (also called the RSF complex) at least composed of SMARCA5/SNF2H and RSF1. Within the complex interacts with RSF1. Interacts with the cohesin complex component RAD21; the interaction is direct. Interacts with the NuRD complex components HDAC2, RBBP4 and CHD4; the interactions are direct. Interacts with PCNA. Component of the B-WICH complex, at least composed of SMARCA5/SNF2H, BAZ1B/WSTF, SF3B1, DEK, MYO1C, ERCC6, MYBBP1A and DDX21 which positively regulates RNA polymerase III transcription. Interacts with MYO1C. Interacts with BEND3. Interacts with SIRT6; promoting recruitment to DNA damage sites. In terms of tissue distribution, ubiquitously expressed.

It is found in the nucleus. It localises to the chromosome. The catalysed reaction is ATP + H2O = ADP + phosphate + H(+). In terms of biological role, ATPase that possesses intrinsic ATP-dependent nucleosome-remodeling activity. Catalytic subunit of ISWI chromatin-remodeling complexes, which form ordered nucleosome arrays on chromatin and facilitate access to DNA during DNA-templated processes such as DNA replication, transcription, and repair; this may require intact histone H4 tails. Within the ISWI chromatin-remodeling complexes, slides edge- and center-positioned histone octamers away from their original location on the DNA template. Catalytic activity and histone octamer sliding propensity is regulated and determined by components of the ISWI chromatin-remodeling complexes. The BAZ1A/ACF1-, BAZ1B/WSTF-, BAZ2A/TIP5- and BAZ2B-containing ISWI chromatin-remodeling complexes regulate the spacing of nucleosomes along the chromatin and have the ability to slide mononucleosomes to the center of a DNA template in an ATP-dependent manner. The CECR2- and RSF1-containing ISWI chromatin-remodeling complexes do not have the ability to slide mononucleosomes to the center of a DNA template. Binds to core histones together with RSF1, and is required for the assembly of regular nucleosome arrays by the RSF-5 ISWI chromatin-remodeling complex. Involved in DNA replication and together with BAZ1A/ACF1 is required for replication of pericentric heterochromatin in S-phase. Probably plays a role in repression of RNA polymerase I dependent transcription of the rDNA locus, through the recruitment of the SIN3/HDAC1 corepressor complex to the rDNA promoter. The WICH-5 ISWI chromatin-remodeling complex regulates the transcription of various genes, has a role in RNA polymerase I and RNA polymerase III transcription, mediates the histone H2AX phosphorylation at 'Tyr-142', and is involved in the maintenance of chromatin structures during DNA replication processes. Essential component of the NoRC-5 ISWI chromatin-remodeling complex, a complex that mediates silencing of a fraction of rDNA by recruiting histone-modifying enzymes and DNA methyltransferases, leading to heterochromatin formation and transcriptional silencing. Required for embryonic development and differentiation, and the proliferation of early blastocyst-derived stem cells. This Mus musculus (Mouse) protein is SWI/SNF-related matrix-associated actin-dependent regulator of chromatin subfamily A member 5 (Smarca5).